A 159-amino-acid chain; its full sequence is Large ribosomal subunit protein eL24 (159 aa).

Residues 118 to 159 (ANKAVRAAKAAANKEKKASQPKTQQKTAKNVKTAAPRVGGKR) form a disordered region. Over residues 137-147 (QPKTQQKTAKN) the composition is skewed to polar residues.

Belongs to the eukaryotic ribosomal protein eL24 family.

The chain is Large ribosomal subunit protein eL24 from Caenorhabditis elegans.